The chain runs to 24 residues: Poly-His-poly-Gly peptide 1 (24 aa).

Residues 1-13 (EDDHHHHHHHHHG) are compositionally biased toward basic residues. The tract at residues 1–24 (EDDHHHHHHHHHGVGGGGGGGGGG) is disordered. The span at 14 to 24 (VGGGGGGGGGG) shows a compositional bias: gly residues.

Expressed by the venom gland.

The protein localises to the secreted. In terms of biological role, may serve as a metalloproteinase inhibitor during glandular storage. Their inhibition may be instantly disengaged, by dilution or physiochemical change, when venom is injected into tissue of the victim. This is Poly-His-poly-Gly peptide 1 from Atheris chlorechis (Western bush viper).